The chain runs to 658 residues: Glycogen debranching enzyme (658 aa).

Aspartate 336 functions as the Nucleophile in the catalytic mechanism. Glutamate 371 (proton donor) is an active-site residue. The segment at glutamate 459 to glycine 484 is disordered.

Belongs to the glycosyl hydrolase 13 family.

The catalysed reaction is Hydrolysis of (1-&gt;6)-alpha-D-glucosidic linkages to branches with degrees of polymerization of three or four glucose residues in limit dextrin.. It participates in glycan degradation; glycogen degradation. Functionally, removes maltotriose and maltotetraose chains that are attached by 1,6-alpha-linkage to the limit dextrin main chain, generating a debranched limit dextrin. This Salmonella choleraesuis (strain SC-B67) protein is Glycogen debranching enzyme.